We begin with the raw amino-acid sequence, 700 residues long: MARKTPIERYRNIGISAHIDAGKTTTTERILFYTGVNHKIGEVHDGAATMDWMEQEQERGITITSAATTAFWRGMAGNFPEHRINIIDTPGHVDFTIEVERSMRVLDGACMVYCAVGGVQPQSETVWRQANKYGVPRLAFVNKMDRTGANFFKVYEQLRTRLRANPVPIVIPIGAEDTFTGVIDLVKMKAIIWDEASQGTKFEYADIPAELQASAEEWREKLVEAAAESSEELMNKYLETGTLEEAEINAAIRQRTIAGEIHPMLCGTAFKNKGVQRMLDAVIEYLPSPIDIPPVDGTDDDGNEVQRRADDSEKFSALAFKLMSDPFVGQLTFVRVYSGVLKSGDTVYNPIKGKKERIGRILQMHANNREEIKEVLAGDIAAVVGLKDVTTGETLCDIDAHVTLERMEFPEPVISQAVEPKSKADQEKMGLALSRLAQEDPSFRVRSDEESGQTIISGMGELHLEILVDRMKREFGVEANVGKPQVAYRETIRKTCDEVEGKFVKQSGGRGQYGHVVLKVEPLAPGGGYEFVDAIKGGVVPREYIPAVDKGIQETLPAGILAGYPVVDVKVTLFFGSYHDVDSNENAFKMAGSMAFKEGMRKASPVLLEPMMAVEVETPEDYAGGVMGDLSSRRGMVQGMDDMVGGGKIIKAEVPLAEMFGYATNLRSLTQGRATYTMEFKHYSEAPKNVADEVIAARGK.

The tr-type G domain maps to 8 to 290 (ERYRNIGISA…AVIEYLPSPI (283 aa)). Residues 17 to 24 (AHIDAGKT), 88 to 92 (DTPGH), and 142 to 145 (NKMD) contribute to the GTP site.

The protein belongs to the TRAFAC class translation factor GTPase superfamily. Classic translation factor GTPase family. EF-G/EF-2 subfamily.

The protein resides in the cytoplasm. Catalyzes the GTP-dependent ribosomal translocation step during translation elongation. During this step, the ribosome changes from the pre-translocational (PRE) to the post-translocational (POST) state as the newly formed A-site-bound peptidyl-tRNA and P-site-bound deacylated tRNA move to the P and E sites, respectively. Catalyzes the coordinated movement of the two tRNA molecules, the mRNA and conformational changes in the ribosome. The polypeptide is Elongation factor G 1 (Bordetella avium (strain 197N)).